We begin with the raw amino-acid sequence, 232 residues long: Ubiquinone biosynthesis O-methyltransferase (232 aa).

The S-adenosyl-L-methionine site is built by arginine 36, glycine 55, aspartate 76, and leucine 120.

It belongs to the methyltransferase superfamily. UbiG/COQ3 family.

The catalysed reaction is a 3-demethylubiquinol + S-adenosyl-L-methionine = a ubiquinol + S-adenosyl-L-homocysteine + H(+). It carries out the reaction a 3-(all-trans-polyprenyl)benzene-1,2-diol + S-adenosyl-L-methionine = a 2-methoxy-6-(all-trans-polyprenyl)phenol + S-adenosyl-L-homocysteine + H(+). It participates in cofactor biosynthesis; ubiquinone biosynthesis. Functionally, O-methyltransferase that catalyzes the 2 O-methylation steps in the ubiquinone biosynthetic pathway. The chain is Ubiquinone biosynthesis O-methyltransferase from Azotobacter vinelandii (strain DJ / ATCC BAA-1303).